Here is a 355-residue protein sequence, read N- to C-terminus: Serpentine receptor class epsilon-1 (355 aa).

Transmembrane regions (helical) follow at residues 28 to 48, 56 to 76, 102 to 122, 144 to 164, 172 to 192, 232 to 252, and 268 to 288; these read FELL…YATI, LNFI…GRFI, ILSS…SLAV, ISLF…IVML, VMAF…LVLF, VVLF…MYMS, and FAFN…IIFS.

The protein belongs to the nematode receptor-like protein sre family.

It is found in the membrane. In Caenorhabditis elegans, this protein is Serpentine receptor class epsilon-1 (sre-1).